A 177-amino-acid polypeptide reads, in one-letter code: Interleukin-7 (177 aa).

The signal sequence occupies residues 1–25; it reads MFHVSFRYIFGLPPLILVLLPVASS. 3 disulfides stabilise this stretch: cysteine 27–cysteine 166, cysteine 59–cysteine 154, and cysteine 72–cysteine 117. Asparagine 95, asparagine 116, and asparagine 141 each carry an N-linked (GlcNAc...) asparagine glycan.

The protein belongs to the IL-7/IL-9 family. As to quaternary structure, interacts with IL7R and CSF2RG.

It localises to the secreted. In terms of biological role, hematopoietic cytokine that plays an essential role in the development, expansion, and survival of naive and memory T-cells and B-cells thereby regulating the number of mature lymphocytes and maintaining lymphoid homeostasis. Mechanistically, exerts its biological effects through a receptor composed of IL7RA subunit and the cytokine receptor common subunit gamma/CSF2RG. Binding to the receptor leads to activation of various kinases including JAK1 or JAK3 depending on the cell type and subsequently propagation of signals through activation of several downstream signaling pathways including the PI3K/Akt/mTOR or the JAK-STAT5. In Homo sapiens (Human), this protein is Interleukin-7 (IL7).